Consider the following 525-residue polypeptide: Mitochondrial-processing peptidase subunit alpha (525 aa).

The transit peptide at 1-33 (MAAMVLAATRLLRGSGSWGRSRPRFGDPAYRRF) directs the protein to the mitochondrion. An N6-succinyllysine modification is found at Lys-64. N6-acetyllysine is present on Lys-299.

It belongs to the peptidase M16 family. In terms of assembly, heterodimer of PMPCA (alpha) and PMPCB (beta) subunits, forming the mitochondrial processing protease (MPP) in which PMPCA is involved in substrate recognition and binding and PMPCB is the catalytic subunit.

The protein localises to the mitochondrion matrix. It localises to the mitochondrion inner membrane. In terms of biological role, substrate recognition and binding subunit of the essential mitochondrial processing protease (MPP), which cleaves the mitochondrial sequence off newly imported precursors proteins. This Bos taurus (Bovine) protein is Mitochondrial-processing peptidase subunit alpha (PMPCA).